Consider the following 280-residue polypeptide: uncharacterized protein (280 aa).

Residues 96-208 enclose the DUF1279 domain; it reads DKSIGIFQRF…GYLSTPPPVK (113 aa). Residues 115–135 form a helical membrane-spanning segment; the sequence is VMVPVHIVTSTVWFGSFYYAA. Positions 207-274 form a coiled coil; the sequence is VKEFLQDKME…KLQETKDKMS (68 aa). Residues 245 to 280 are disordered; sequence SERMEETKERFSETKDKFSEKLQETKDKMSFRKKAD.

Its subcellular location is the membrane. This is an uncharacterized protein from Danio rerio (Zebrafish).